A 354-amino-acid polypeptide reads, in one-letter code: tRNA-specific 2-thiouridylase MnmA (354 aa).

ATP-binding positions include 6 to 13 and Leu33; that span reads LLSGGVDS. The Nucleophile role is filled by Cys100. The cysteines at positions 100 and 195 are disulfide-linked. Gly123 is a binding site for ATP. Residues 145–147 are interaction with tRNA; sequence KDQ. Cys195 serves as the catalytic Cysteine persulfide intermediate.

It belongs to the MnmA/TRMU family.

Its subcellular location is the cytoplasm. It catalyses the reaction S-sulfanyl-L-cysteinyl-[protein] + uridine(34) in tRNA + AH2 + ATP = 2-thiouridine(34) in tRNA + L-cysteinyl-[protein] + A + AMP + diphosphate + H(+). In terms of biological role, catalyzes the 2-thiolation of uridine at the wobble position (U34) of tRNA, leading to the formation of s(2)U34. The protein is tRNA-specific 2-thiouridylase MnmA of Borrelia duttonii (strain Ly).